Consider the following 711-residue polypeptide: 1,4-alpha-glucan-branching enzyme (711 aa).

2 residues coordinate (1,4-alpha-D-glucosyl)n: W98 and K135. Residue D353 is the Nucleophile of the active site. E414 (proton donor) is an active-site residue.

The protein belongs to the glycosyl hydrolase 13 family. GlgB subfamily.

Its subcellular location is the cytoplasm. It carries out the reaction Transfers a segment of a (1-&gt;4)-alpha-D-glucan chain to a primary hydroxy group in a similar glucan chain.. The protein operates within glycan biosynthesis; glycogen biosynthesis. Glycogen-branching enzyme participates in the glycogen biosynthetic process along with glycogenin and glycogen synthase. Generates alpha-1,6-glucosidic branches from alpha-1,4-linked glucose chains, to increase solubility of the glycogen polymer. This is 1,4-alpha-glucan-branching enzyme (GLC3) from Debaryomyces hansenii (strain ATCC 36239 / CBS 767 / BCRC 21394 / JCM 1990 / NBRC 0083 / IGC 2968) (Yeast).